We begin with the raw amino-acid sequence, 180 residues long: ATP synthase subunit delta (180 aa).

The protein belongs to the ATPase delta chain family. In terms of assembly, F-type ATPases have 2 components, F(1) - the catalytic core - and F(0) - the membrane proton channel. F(1) has five subunits: alpha(3), beta(3), gamma(1), delta(1), epsilon(1). F(0) has three main subunits: a(1), b(2) and c(10-14). The alpha and beta chains form an alternating ring which encloses part of the gamma chain. F(1) is attached to F(0) by a central stalk formed by the gamma and epsilon chains, while a peripheral stalk is formed by the delta and b chains.

It localises to the cell inner membrane. Its function is as follows. F(1)F(0) ATP synthase produces ATP from ADP in the presence of a proton or sodium gradient. F-type ATPases consist of two structural domains, F(1) containing the extramembraneous catalytic core and F(0) containing the membrane proton channel, linked together by a central stalk and a peripheral stalk. During catalysis, ATP synthesis in the catalytic domain of F(1) is coupled via a rotary mechanism of the central stalk subunits to proton translocation. This protein is part of the stalk that links CF(0) to CF(1). It either transmits conformational changes from CF(0) to CF(1) or is implicated in proton conduction. This is ATP synthase subunit delta from Geotalea uraniireducens (strain Rf4) (Geobacter uraniireducens).